Reading from the N-terminus, the 105-residue chain is Urease subunit gamma (105 aa).

This sequence belongs to the urease gamma subunit family. Heterotrimer of UreA (gamma), UreB (beta) and UreC (alpha) subunits. Three heterotrimers associate to form the active enzyme.

Its subcellular location is the cytoplasm. The catalysed reaction is urea + 2 H2O + H(+) = hydrogencarbonate + 2 NH4(+). It participates in nitrogen metabolism; urea degradation; CO(2) and NH(3) from urea (urease route): step 1/1. The sequence is that of Urease subunit gamma from Bacillus subtilis (strain 168).